Here is a 328-residue protein sequence, read N- to C-terminus: Glycerol-3-phosphate dehydrogenase [NAD(P)+] (328 aa).

Trp15, His35, Tyr51, and Lys107 together coordinate NADPH. 3 residues coordinate sn-glycerol 3-phosphate: Lys107, Gly135, and Ser137. Residue Ala139 participates in NADPH binding. Lys190, Asp243, Ser253, Arg254, and Asn255 together coordinate sn-glycerol 3-phosphate. Catalysis depends on Lys190, which acts as the Proton acceptor. Arg254 lines the NADPH pocket. NADPH-binding residues include Leu276 and Glu278.

It belongs to the NAD-dependent glycerol-3-phosphate dehydrogenase family.

It localises to the cytoplasm. The enzyme catalyses sn-glycerol 3-phosphate + NAD(+) = dihydroxyacetone phosphate + NADH + H(+). The catalysed reaction is sn-glycerol 3-phosphate + NADP(+) = dihydroxyacetone phosphate + NADPH + H(+). It functions in the pathway membrane lipid metabolism; glycerophospholipid metabolism. Catalyzes the reduction of the glycolytic intermediate dihydroxyacetone phosphate (DHAP) to sn-glycerol 3-phosphate (G3P), the key precursor for phospholipid synthesis. The chain is Glycerol-3-phosphate dehydrogenase [NAD(P)+] from Rhodopseudomonas palustris (strain BisA53).